Here is a 110-residue protein sequence, read N- to C-terminus: Large ribosomal subunit protein uL22 (110 aa).

This sequence belongs to the universal ribosomal protein uL22 family. In terms of assembly, part of the 50S ribosomal subunit.

In terms of biological role, this protein binds specifically to 23S rRNA; its binding is stimulated by other ribosomal proteins, e.g. L4, L17, and L20. It is important during the early stages of 50S assembly. It makes multiple contacts with different domains of the 23S rRNA in the assembled 50S subunit and ribosome. The globular domain of the protein is located near the polypeptide exit tunnel on the outside of the subunit, while an extended beta-hairpin is found that lines the wall of the exit tunnel in the center of the 70S ribosome. The polypeptide is Large ribosomal subunit protein uL22 (Hydrogenovibrio crunogenus (strain DSM 25203 / XCL-2) (Thiomicrospira crunogena)).